A 353-amino-acid chain; its full sequence is UPF0283 membrane protein YPTS_2342 (353 aa).

A run of 3 helical transmembrane segments spans residues 71–91, 101–121, and 214–234; these read MVTAGMVILGASVIAQSVQWV, IALGATTAGGLIILAGVGSVV, and ESALMIAVSPLALVDMAFIAW.

The protein belongs to the UPF0283 family.

It localises to the cell inner membrane. The polypeptide is UPF0283 membrane protein YPTS_2342 (Yersinia pseudotuberculosis serotype IB (strain PB1/+)).